The primary structure comprises 91 residues: Large ribosomal subunit protein uL23 (91 aa).

The protein belongs to the universal ribosomal protein uL23 family. In terms of assembly, part of the 50S ribosomal subunit. Contacts protein L29, and trigger factor when it is bound to the ribosome.

Its function is as follows. One of the early assembly proteins it binds 23S rRNA. One of the proteins that surrounds the polypeptide exit tunnel on the outside of the ribosome. Forms the main docking site for trigger factor binding to the ribosome. The chain is Large ribosomal subunit protein uL23 from Staphylococcus saprophyticus subsp. saprophyticus (strain ATCC 15305 / DSM 20229 / NCIMB 8711 / NCTC 7292 / S-41).